The chain runs to 1440 residues: Actin cytoskeleton-regulatory complex protein PAN1 (1440 aa).

A compositionally biased stretch (polar residues) spans 1–21 (MYNPYQQPSYGAPQQPQQTGY). The segment at 1–67 (MYNPYQQPSY…TGFQPQATGY (67 aa)) is disordered. Residues 39 to 63 (TGYYQQQPTYQQPGFQPQQTGFQPQ) are compositionally biased toward low complexity. The 90-residue stretch at 117–206 (DQSKFEHLFR…EKWSNEVQSF (90 aa)) folds into the EH 1 domain. Positions 150–185 (LPPVTLAEIWSLSDTNKSGSLLFPEFALSLHLCNLA) constitute an EF-hand 1 domain. Disordered regions lie at residues 234 to 285 (EKTS…PLQP) and 297 to 428 (QRQN…KPGQ). Composition is skewed to polar residues over residues 245–257 (PSTS…TGFQ) and 297–384 (QRQN…YQPL). Residues 385-398 (QSQGTGFQSQGTIQ) show a composition bias toward low complexity. Positions 399–423 (PQGTGFQPQSTGFQPQPTGLSSQPT) are enriched in polar residues. Residues 480 to 569 (EKSIYDGIFQ…PELIPPSKKH (90 aa)) form the EH 2 domain. The EF-hand 2 domain occupies 513–548 (LARPDLETIWNLADGDNKGKLNKDEFSVAMHLVYRR). Disordered regions lie at residues 564-629 (PPSK…GTMS) and 861-1440 (RSLP…RVVD). The span at 573–583 (SMDSLKNSLRG) shows a compositional bias: polar residues. Positions 627–686 (TMSIEQLKKEIREKKILLDAMDSEDRDSSVLSQRDREWNEREIESLKFRILQAHNKLESS) form a coiled coil. Residues 867–876 (EGSKNGRNEK) are compositionally biased toward basic and acidic residues. Over residues 882–914 (TQPTKSQSQSAQSTQSQSQSTQSVQTQPAQPAT) the composition is skewed to low complexity. The segment covering 921-984 (PEDRAAYIKA…KETETQRETN (64 aa)) has biased composition (basic and acidic residues). Residues 985-994 (TKSTSQTSKA) show a composition bias toward polar residues. Acidic residues predominate over residues 1023–1032 (PEDDSEDEEY). Residues 1024-1076 (EDDSEDEEYAALMKQKQEMEERRLRKKKEKEERLARLKREMEEMNKEEDSDEE) adopt a coiled-coil conformation. Positions 1038 to 1067 (QKQEMEERRLRKKKEKEERLARLKREMEEM) are enriched in basic and acidic residues. Residues 1068-1077 (NKEEDSDEEP) show a composition bias toward acidic residues. Positions 1080–1100 (SVPTYTNGSVKSSTQPISQSE) are enriched in polar residues. Over residues 1101–1112 (EVPKTEEEKSGE) the composition is skewed to basic and acidic residues. Residues 1140–1155 (SKANPFSKNNNPFFKP) show a composition bias toward low complexity. Acidic residues predominate over residues 1180–1192 (DWSDSDDNSSDDD). The segment covering 1218–1230 (TIEKEETGSKETA) has biased composition (basic and acidic residues). Pro residues-rich tracts occupy residues 1232-1255 (VPPP…PPPI), 1311-1324 (DVPP…PPPQ), 1333-1353 (APPP…PPSL), and 1362-1402 (PPAP…PPGG). The 18-residue stretch at 1405–1422 (NIGALLGQITGGKSLKKV) folds into the WH2 domain. Basic and acidic residues predominate over residues 1420-1430 (KKVDDSQKRIA).

This sequence belongs to the PAN1 family. Component of the PAN1 actin cytoskeleton-regulatory complex.

The protein resides in the cell membrane. The protein localises to the endosome membrane. It is found in the cytoplasm. It localises to the cytoskeleton. Its subcellular location is the actin patch. Component of the PAN1 actin cytoskeleton-regulatory complex required for the internalization of endosomes during actin-coupled endocytosis. The complex links the site of endocytosis to the cell membrane-associated actin cytoskeleton. Mediates uptake of external molecules and vacuolar degradation of plasma membrane proteins. Plays a role in the proper organization of the cell membrane-associated actin cytoskeleton and promotes its destabilization. This Meyerozyma guilliermondii (strain ATCC 6260 / CBS 566 / DSM 6381 / JCM 1539 / NBRC 10279 / NRRL Y-324) (Yeast) protein is Actin cytoskeleton-regulatory complex protein PAN1 (PAN1).